Consider the following 156-residue polypeptide: Endogenous retrovirus group K member 7 Pro protein (156 aa).

The Peptidase A2 domain occupies Phe-21–Leu-96. Residue Asp-26 is part of the active site. Positions Tyr-111–Phe-156 constitute a G-patch domain.

The protein belongs to the peptidase A2 family. HERV class-II K(HML-2) subfamily. Active as a homodimer. Autoproteolytically processed at the N-terminus. Expected C-terminal autoprocessing not detected. The sequence shown is that of the processed Pro protein.

It carries out the reaction Processing at the authentic HIV-1 PR recognition site and release of the mature p17 matrix and the p24 capsid protein, as a result of the cleavage of the -SQNY-|-PIVQ- cleavage site.. In terms of biological role, retroviral proteases have roles in processing of the primary translation products and the maturation of the viral particle. Endogenous Pro proteins may have kept, lost or modified their original function during evolution. This endogenous protein has retained most of the characteristics of retroviral proteases. The chain is Endogenous retrovirus group K member 7 Pro protein (ERVK-7) from Homo sapiens (Human).